Reading from the N-terminus, the 256-residue chain is Nuclear shuttle protein (256 aa).

The segment at 1–53 (MYPSRNKRGSYFNQRRQYSRNHVWKRPTAAKRHDWKRRPSNTSKPNDEPKMSA) is disordered. A compositionally biased stretch (basic residues) spans 17–39 (QYSRNHVWKRPTAAKRHDWKRRP). A Bipartite nuclear localization signal motif is present at residues 21 to 42 (NHVWKRPTAAKRHDWKRRPSNT). The Nuclear localization signal motif lies at 81–96 (DLGRSEPNRSRSYIRL). Residues 150–187 (ELFGARIHSHGNLSVTPALKDRYYIRHVCKRVLSVEKD) are interaction with Arabidopsis thaliana NSI protein.

Belongs to the begomovirus nuclear shuttle protein family. Binds to single-stranded and double-stranded viral DNA. Interacts with the host nuclear shuttle interacting (NSI) protein. This interaction may allow NSP to recruit NSI monomers to the viral genome and thus regulate nuclear export of viral genome by NSP.

Its subcellular location is the host nucleus. The protein resides in the host cytoplasm. It is found in the host cell membrane. Its function is as follows. Binds to the genomic viral ssDNA, shuttles it into and out of the cell nucleus. Begomoviruses use 2 proteins to transport their DNA from cell to cell. The nuclear shuttle protein (NSP) shuttles it between nucleus and cytoplasm and the movement protein (MP) probably transports the DNA-NSP complex to the cell periphery and facilitates movement across the cell wall. The sequence is that of Nuclear shuttle protein from Abutilon mosaic virus (isolate West India) (AbMV).